The primary structure comprises 211 residues: Protein-L-isoaspartate O-methyltransferase (211 aa).

Serine 59 is an active-site residue.

Belongs to the methyltransferase superfamily. L-isoaspartyl/D-aspartyl protein methyltransferase family.

The protein resides in the cytoplasm. The catalysed reaction is [protein]-L-isoaspartate + S-adenosyl-L-methionine = [protein]-L-isoaspartate alpha-methyl ester + S-adenosyl-L-homocysteine. Functionally, catalyzes the methyl esterification of L-isoaspartyl residues in peptides and proteins that result from spontaneous decomposition of normal L-aspartyl and L-asparaginyl residues. It plays a role in the repair and/or degradation of damaged proteins. The sequence is that of Protein-L-isoaspartate O-methyltransferase from Ignicoccus hospitalis (strain KIN4/I / DSM 18386 / JCM 14125).